A 38-amino-acid polypeptide reads, in one-letter code: Trypsin inhibitor DE5 beta chain (38 aa).

It belongs to the protease inhibitor I3 (leguminous Kunitz-type inhibitor) family. Heterodimer of an alpha and a beta chain linked by a disulfide bond.

In terms of biological role, inhibition of trypsin. This is Trypsin inhibitor DE5 beta chain from Adenanthera pavonina (Sandal bead tree).